The sequence spans 541 residues: Cilia- and flagella-associated protein 97 (541 aa).

Phosphoserine is present on residues serine 8 and serine 19. 5 disordered regions span residues 28–47, 93–296, 313–337, 406–430, and 495–514; these read ESNS…GINK, ERKA…KQEN, RCVK…VLDA, LSRQ…PPKL, and HYSP…GLSC. Basic and acidic residues-rich tracts occupy residues 35–47, 93–107, and 142–151; these read KQND…GINK, ERKA…HIEN, and RIPKIVKGED. The span at 152 to 161 shows a compositional bias: acidic residues; that stretch reads DYYTDGEESS. Threonine 155 carries the phosphothreonine modification. Serine 160 and serine 161 each carry phosphoserine. A compositionally biased stretch (low complexity) spans 176–201; it reads SSNLKKNVSKKYSSSSLSSSSSRSNS. Basic and acidic residues predominate over residues 207 to 218; the sequence is GSDRQRRSESHS. Polar residues-rich tracts occupy residues 219-232 and 240-250; these read SGKC…SSPK and KSSAQPSSTKQ. Serine 230 is subject to Phosphoserine. Serine 258 carries the phosphoserine modification. Positions 267–277 are enriched in polar residues; it reads PLSTPDVSPAQ. Positions 287 to 296 are enriched in basic and acidic residues; that stretch reads QKVKVKKQEN. Residues 382–459 adopt a coiled-coil conformation; the sequence is RKNYSFTREE…ALLKRLEAVK (78 aa). Residues 503–513 are compositionally biased toward polar residues; the sequence is SRTSSATSGLS.

The protein belongs to the CFAP97 family. In terms of tissue distribution, highly expressed in testis with lower levels detected in other tissues including lung, heart and kidney.

The protein is Cilia- and flagella-associated protein 97 of Mus musculus (Mouse).